The following is a 46-amino-acid chain: Large ribosomal subunit protein bL34 (46 aa).

Belongs to the bacterial ribosomal protein bL34 family.

This is Large ribosomal subunit protein bL34 (rpmH) from Mycobacterium avium.